The following is a 193-amino-acid chain: Ion-translocating oxidoreductase complex subunit A (193 aa).

Helical transmembrane passes span 5 to 25 (LLLLVGTVLINNFVLVKFLGL), 39 to 59 (IGMGLATTFVMTLASACSYLM), 63 to 83 (ILIPLNIAYLRTLAFILVIAV), 102 to 122 (LLGIFLPLITTNCAVLGVALL), 134 to 154 (IIYGFGAATGFSLVLILFAAM), and 171 to 191 (SIAMITAGLMSLAFMGFTGLI).

This sequence belongs to the NqrDE/RnfAE family. The complex is composed of six subunits: RnfA, RnfB, RnfC, RnfD, RnfE and RnfG.

Its subcellular location is the cell inner membrane. Functionally, part of a membrane-bound complex that couples electron transfer with translocation of ions across the membrane. The sequence is that of Ion-translocating oxidoreductase complex subunit A from Aeromonas hydrophila subsp. hydrophila (strain ATCC 7966 / DSM 30187 / BCRC 13018 / CCUG 14551 / JCM 1027 / KCTC 2358 / NCIMB 9240 / NCTC 8049).